A 161-amino-acid polypeptide reads, in one-letter code: Ribonuclease H (161 aa).

The region spanning glutamate 5–lysine 149 is the RNase H type-1 domain. Mg(2+) contacts are provided by aspartate 14, glutamate 53, aspartate 78, and aspartate 141.

It belongs to the RNase H family. In terms of assembly, monomer. Requires Mg(2+) as cofactor.

The protein resides in the cytoplasm. It carries out the reaction Endonucleolytic cleavage to 5'-phosphomonoester.. Endonuclease that specifically degrades the RNA of RNA-DNA hybrids. The chain is Ribonuclease H from Prochlorococcus marinus (strain NATL2A).